The chain runs to 306 residues: tRNA-cytidine(32) 2-sulfurtransferase (306 aa).

A PP-loop motif motif is present at residues 44–49 (SGGKDS). The [4Fe-4S] cluster site is built by Cys119, Cys122, and Cys210.

Belongs to the TtcA family. In terms of assembly, homodimer. Mg(2+) is required as a cofactor. [4Fe-4S] cluster serves as cofactor.

It is found in the cytoplasm. The enzyme catalyses cytidine(32) in tRNA + S-sulfanyl-L-cysteinyl-[cysteine desulfurase] + AH2 + ATP = 2-thiocytidine(32) in tRNA + L-cysteinyl-[cysteine desulfurase] + A + AMP + diphosphate + H(+). Its pathway is tRNA modification. In terms of biological role, catalyzes the ATP-dependent 2-thiolation of cytidine in position 32 of tRNA, to form 2-thiocytidine (s(2)C32). The sulfur atoms are provided by the cysteine/cysteine desulfurase (IscS) system. This Photorhabdus laumondii subsp. laumondii (strain DSM 15139 / CIP 105565 / TT01) (Photorhabdus luminescens subsp. laumondii) protein is tRNA-cytidine(32) 2-sulfurtransferase.